Consider the following 1338-residue polypeptide: Thioester-containing protein 1 allele R1 (1338 aa).

Positions 1–21 are cleaved as a signal peptide; the sequence is MWQFIRSRILTVIIFIGAAHG. N68, N199, N242, N312, and N481 each carry an N-linked (GlcNAc...) asparagine glycan. The may contain the cleavage site stretch occupies residues 580–609; it reads ENEFDIFHSLGLFARTLDDILFDSANEKTG. 3 N-linked (GlcNAc...) asparagine glycosylation sites follow: N637, N728, and N813. Residues 859 to 862 constitute a cross-link (isoglutamyl cysteine thioester (Cys-Gln)); it reads CGEQ. N919 and N1065 each carry an N-linked (GlcNAc...) asparagine glycan. 3 disulfide bridges follow: C1217-C1283, C1326-C1338, and C1329-C1334.

Heterodimer of a TEP1-N chain and an TEP1-C chain non-covalently linked. Forms a complex composed of TEP1-N and TEP1-C heterodimer, LRIM1 and APL1C; the interaction stabilizes TEP1-N and TEP1-C heterodimer, prevents its binding to tissues while circulating in the hemolymph and protects the thioester bond from hydrolysis. Mature TEP1 and to a lesser extent full-length TEP1 interact with SPCLIP1; the interaction is induced by microbial infection. Post-translationally, in the hemolymph, the full-length protein is cleaved by an unknow protease into a 75kDa N-terminal (TEP1-N) chain and an 80kDa C-terminal (TEP1-C) chain which remain non-covalently linked. The TEP1-C chain contains the thioester bond which covalently binds to the pathogen surface. Cleavage is induced by bacterial infection or aseptic wound injury. During embryonic and pupal development, the cleaved form is the predominant form. N-glycosylated.

The protein localises to the secreted. In terms of biological role, plays an essential role in the innate immune response against bacteria, fungi and protozoa infection. After proteolytic cleavage, the protein C-terminus binds covalently through a thioester bond to the pathogen surface resulting in pathogen clearance either by melanization or lysis. Initiate the recruitment and activation of a cascade of proteases, mostly of CLIP-domain serine proteases, which leads to the proteolytic cleavage of the prophenoloxidase (PPO) into active phenoloxidase (PO), the rate-limiting enzyme in melanin biosynthesis. In response to parasite P.berghei-mediated infection, binds to and mediates killing of ookinetes, as they egress from midgut epithelial cells into the basal labyrinth, by both lysis and melanization. During bacterial infection, binds to both Gram-positive and Gram-negative bacteria but only promotes phagocytosis of Gram-negative bacteria. Promotes the accumulation of SPCLIP1 onto the surface of P.berghei ookinetes and bacterium E.coli which leads to the melanization of the pathogen. Recruits CLIPA2 to bacteria surface. In response to bacterial infection, required for periostial hemocyte aggregation, but not for the aggregation of sessile hemocytes in non-periostial regions. During the late stage of fungus B.bassiana-mediated infection, required for the initiation of hyphae melanization by binding to the surface of hyphae and recruiting prophenoloxidase PPO to them. Plays a role in male fertility by binding to defective sperm cells and promoting their removal during spermatogenesis. Functionally, binds to and mediates killing of parasite P.bergei ookinetes by lysis and melanization. Binds covalently through a thioester bond to the pathogen surface resulting in pathogen clearance. This is Thioester-containing protein 1 allele R1 from Anopheles gambiae (African malaria mosquito).